We begin with the raw amino-acid sequence, 146 residues long: Gonadotropin subunit beta-2 (146 aa).

Residues 1–22 (MTVEISKVFVLMMLNLFLGASS) form the signal peptide. 6 disulfides stabilise this stretch: cysteine 37–cysteine 85, cysteine 51–cysteine 100, cysteine 54–cysteine 138, cysteine 62–cysteine 116, cysteine 66–cysteine 118, and cysteine 121–cysteine 128. An N-linked (GlcNAc...) asparagine glycan is attached at asparagine 41.

Belongs to the glycoprotein hormones subunit beta family. Heterodimer of an alpha and a beta chain.

The protein resides in the secreted. Involved in gametogenesis and steroidogenesis. The sequence is that of Gonadotropin subunit beta-2 (cgbb) from Trichopodus trichopterus (Three spot gourami).